A 97-amino-acid polypeptide reads, in one-letter code: Small ribosomal subunit protein bS20 (97 aa).

This sequence belongs to the bacterial ribosomal protein bS20 family.

Its function is as follows. Binds directly to 16S ribosomal RNA. The polypeptide is Small ribosomal subunit protein bS20 (Methylibium petroleiphilum (strain ATCC BAA-1232 / LMG 22953 / PM1)).